A 305-amino-acid polypeptide reads, in one-letter code: Coenzyme PQQ synthesis protein B (305 aa).

It belongs to the PqqB family.

It participates in cofactor biosynthesis; pyrroloquinoline quinone biosynthesis. Its function is as follows. May be involved in the transport of PQQ or its precursor to the periplasm. This is Coenzyme PQQ synthesis protein B from Cupriavidus necator (strain ATCC 17699 / DSM 428 / KCTC 22496 / NCIMB 10442 / H16 / Stanier 337) (Ralstonia eutropha).